Consider the following 125-residue polypeptide: Small ribosomal subunit protein bS6 (125 aa).

The segment at 96–125 (VTEASPMKAAKEERKPLAEVENNDFEDAEE) is disordered. Positions 104-113 (AAKEERKPLA) are enriched in basic and acidic residues. The span at 116-125 (ENNDFEDAEE) shows a compositional bias: acidic residues.

Belongs to the bacterial ribosomal protein bS6 family.

Functionally, binds together with bS18 to 16S ribosomal RNA. The sequence is that of Small ribosomal subunit protein bS6 from Haemophilus influenzae (strain 86-028NP).